The following is a 102-amino-acid chain: Small ribosomal subunit protein uS10 (102 aa).

It belongs to the universal ribosomal protein uS10 family. As to quaternary structure, part of the 30S ribosomal subunit.

Involved in the binding of tRNA to the ribosomes. The sequence is that of Small ribosomal subunit protein uS10 from Clostridium perfringens (strain ATCC 13124 / DSM 756 / JCM 1290 / NCIMB 6125 / NCTC 8237 / Type A).